The following is a 288-amino-acid chain: Phosphatidylglycerol--prolipoprotein diacylglyceryl transferase (288 aa).

The next 4 membrane-spanning stretches (helical) occupy residues 8–28 (IGPIELHYYGLMYAIAFFVGI), 49–69 (AFVAIISGLIGGRLYYILFNL), 79–99 (ILAVWHGGMAIHGGILGGIAG), and 109–129 (INPLILGDFAAGPFILGQAIG). Residue Arg130 coordinates a 1,2-diacyl-sn-glycero-3-phospho-(1'-sn-glycerol). 3 helical membrane-spanning segments follow: residues 203–223 (PAMLYELILNLIGFFIIWFIL), 232–252 (GYMWWWYIIIYSINRIIVSFF), and 259–279 (FFNFRAPHVISIILIAVSIFF).

This sequence belongs to the Lgt family.

It is found in the cell inner membrane. The enzyme catalyses L-cysteinyl-[prolipoprotein] + a 1,2-diacyl-sn-glycero-3-phospho-(1'-sn-glycerol) = an S-1,2-diacyl-sn-glyceryl-L-cysteinyl-[prolipoprotein] + sn-glycerol 1-phosphate + H(+). Its pathway is protein modification; lipoprotein biosynthesis (diacylglyceryl transfer). Catalyzes the transfer of the diacylglyceryl group from phosphatidylglycerol to the sulfhydryl group of the N-terminal cysteine of a prolipoprotein, the first step in the formation of mature lipoproteins. The protein is Phosphatidylglycerol--prolipoprotein diacylglyceryl transferase of Fusobacterium nucleatum subsp. nucleatum (strain ATCC 25586 / DSM 15643 / BCRC 10681 / CIP 101130 / JCM 8532 / KCTC 2640 / LMG 13131 / VPI 4355).